The primary structure comprises 596 residues: UvrABC system protein C (596 aa).

The 80-residue stretch at 16-95 (SSPGVYRFYS…IKENKPKYNV (80 aa)) folds into the GIY-YIG domain. The 36-residue stretch at 209-244 (SSVKKYYQEKMLSAAEDMQFEKAQFFKERYNSVLGL) folds into the UVR domain.

Belongs to the UvrC family. In terms of assembly, interacts with UvrB in an incision complex.

It localises to the cytoplasm. The UvrABC repair system catalyzes the recognition and processing of DNA lesions. UvrC both incises the 5' and 3' sides of the lesion. The N-terminal half is responsible for the 3' incision and the C-terminal half is responsible for the 5' incision. This chain is UvrABC system protein C, found in Cytophaga hutchinsonii (strain ATCC 33406 / DSM 1761 / CIP 103989 / NBRC 15051 / NCIMB 9469 / D465).